Here is a 381-residue protein sequence, read N- to C-terminus: Prokineticin receptor 2 (381 aa).

Residues 1-51 (MGPQNRNTSFAPDLNPPQDHVSLNYSYGDYDLPLGEDEDVTKTQTFFAAKI) are Extracellular-facing. Residues N7 and N24 are each glycosylated (N-linked (GlcNAc...) asparagine). A helical transmembrane segment spans residues 52-72 (VIGVALAGIMLVCGIGNFVFI). Topologically, residues 73–86 (AALARYKKLRNLTN) are cytoplasmic. Residues 87-107 (LLIANLAISDFLVAIVCCPFE) traverse the membrane as a helical segment. Residues 108–133 (MDYYVVRQLSWAHGHVLCASVNYLRT) lie on the Extracellular side of the membrane. A disulfide bridge links C125 with C205. Residues 134–154 (VSLYVSTNALLAIAIDRYLAI) form a helical membrane-spanning segment. The Cytoplasmic portion of the chain corresponds to 155–168 (VHPLKPRMNYQTAS). The chain crosses the membrane as a helical span at residues 169 to 189 (FLIALVWMVSILIAVPSAYFT). Residues 190-220 (TETILVIVKNQEKIFCGQIWSVDQQLYYKSY) are Extracellular-facing. A helical membrane pass occupies residues 221 to 241 (FLFVFGLEFVGPVVTMTLCYA). Residues 242-270 (RISQELWFKAVPGFQTEQIRKRLRCRRKT) are Cytoplasmic-facing. A helical membrane pass occupies residues 271–291 (VLLLMGILTAYVLCWAPFYGF). The Extracellular segment spans residues 292-310 (TIVRDFFPTVVVKEKHYLT). The helical transmembrane segment at 311 to 331 (AFYVVECIAMSNSMINTICFV) threads the bilayer. Residues 332 to 381 (TVKNNTMKYFKKMLRLHWRPSHYGSKSSADLDLKTSGVPATEEVDCIRLK) lie on the Cytoplasmic side of the membrane.

This sequence belongs to the G-protein coupled receptor 1 family. Homodimer. As to expression, expressed in several regions of the brain, including paraventricular hypothalamic nucleus, dorsal medial hypothalamic nucleus, paratenial thalamic nuclei, paracentral thalamic nucleus, lateral habenular nucleus, lateral septal nucleus, lateral globus pallidus and amygdala. Highest expression seen in paraventricular thalamic nuclei and is also extensively expressed in the suprachiasmatic nucleus.

It is found in the cell membrane. Functionally, receptor for prokineticin 2. Exclusively coupled to the G(q) subclass of heteromeric G proteins. Activation leads to mobilization of calcium, stimulation of phosphoinositide turnover and activation of p44/p42 mitogen-activated protein kinase. The polypeptide is Prokineticin receptor 2 (Prokr2) (Mus musculus (Mouse)).